The primary structure comprises 149 residues: Ubiquitin-conjugating enzyme E2 pex4 (149 aa).

The region spanning 1 to 149 (MAARLMKEYK…ARMYTRLYGC (149 aa)) is the UBC core domain. C86 functions as the Glycyl thioester intermediate in the catalytic mechanism.

This sequence belongs to the ubiquitin-conjugating enzyme family.

The enzyme catalyses S-ubiquitinyl-[E1 ubiquitin-activating enzyme]-L-cysteine + [E2 ubiquitin-conjugating enzyme]-L-cysteine = [E1 ubiquitin-activating enzyme]-L-cysteine + S-ubiquitinyl-[E2 ubiquitin-conjugating enzyme]-L-cysteine.. The protein operates within protein modification; protein ubiquitination. Catalyzes the covalent attachment of ubiquitin to other proteins. Essential for peroxisome biogenesis. The protein is Ubiquitin-conjugating enzyme E2 pex4 (pex4) of Dictyostelium discoideum (Social amoeba).